We begin with the raw amino-acid sequence, 177 residues long: Late embryogenesis abundant protein 1 (177 aa).

A disordered region spans residues 1-177; the sequence is MASHDQSYKA…DKDHFPTNRH (177 aa). Residues 28 to 39 show a composition bias toward basic and acidic residues; it reads IEDKAQAAKEKA. Over residues 40 to 89 the composition is skewed to low complexity; sequence QQAAQTAKDKTSQTAQAAKEKTQQTAQAAKEKTQQTAQAAKDETQQTAQA. A run of 4 repeats spans residues 53-63, 64-74, 75-85, and 86-96. The interval 53–96 is 4 X 11 AA approximate tandem repeats of T-A-Q-A-A-K-E-K-T-Q-Q; the sequence is TAQAAKEKTQQTAQAAKEKTQQTAQAAKDETQQTAQAAKDKTQQ. Residues 90-117 show a composition bias toward basic and acidic residues; it reads AKDKTQQTTEATKEKAQDTTGRAREKGS. Positions 119-142 are enriched in polar residues; it reads MGQSTKETAQSGKDNSAGFLQQTG. The span at 164–177 shows a compositional bias: basic and acidic residues; the sequence is NDDKDKDHFPTNRH.

This sequence belongs to the LEA type 4 family. Highest expression is found in seeds. No expression detected in adult tissues.

In Cicer arietinum (Chickpea), this protein is Late embryogenesis abundant protein 1.